The sequence spans 477 residues: Putative multidrug resistance protein MdtD (477 aa).

A run of 14 helical transmembrane segments spans residues 13 to 33 (LWIV…VNTA), 50 to 70 (SVIV…GWLA), 73 to 93 (VGVQ…SILC), 107 to 127 (VVQG…VMKI), 139 to 159 (FVTL…GFLV), 166 to 186 (WIFL…LLLM), 196 to 216 (FDIS…LALD), 220 to 240 (GMGL…AALA), 268 to 288 (LTAS…TPLF), 291 to 311 (VGMG…IIGS), 326 to 348 (GYRN…FPLV), 352 to 374 (GWIW…RFSA), 394 to 414 (LLSM…GILI), and 432 to 452 (AFIY…LAFA).

It belongs to the major facilitator superfamily. TCR/Tet family.

It localises to the cell inner membrane. The protein is Putative multidrug resistance protein MdtD of Serratia proteamaculans (strain 568).